A 144-amino-acid chain; its full sequence is HMG1/2-like protein (144 aa).

Disordered stretches follow at residues 1–42 (MKGG…PPSA) and 85–144 (PFIS…EDDD). Composition is skewed to basic and acidic residues over residues 8–35 (AKSD…DPNK) and 89–99 (KAEKRKQEYEK). Residues 36–105 (PKRPPSAFFV…EYEKNLQAYN (70 aa)) constitute a DNA-binding region (HMG box). Over residues 126 to 144 (NDDDEDQDGSGEDDSEDDD) the composition is skewed to acidic residues.

Belongs to the HMGB family. In terms of tissue distribution, expressed at higher levels in dark-grown tissues, such as roots; and at lower levels in light-grown tissues, such as cotyledons and stems.

It localises to the nucleus. In Ipomoea nil (Japanese morning glory), this protein is HMG1/2-like protein.